Reading from the N-terminus, the 416-residue chain is Esterase FrsA (416 aa).

The segment at 19-39 (ETSTLVRRTRHDQETQGLHST) is disordered.

The protein belongs to the FrsA family.

It carries out the reaction a carboxylic ester + H2O = an alcohol + a carboxylate + H(+). Functionally, catalyzes the hydrolysis of esters. The sequence is that of Esterase FrsA from Pectobacterium atrosepticum (strain SCRI 1043 / ATCC BAA-672) (Erwinia carotovora subsp. atroseptica).